The sequence spans 301 residues: Transcriptional activator FeaR (301 aa).

One can recognise an HTH araC/xylS-type domain in the interval 199 to 299 (QKVVTLIDDN…GMTPGEYRRK (101 aa)). 2 DNA-binding regions (H-T-H motif) span residues 217-238 (EWIAGETGMSVRSLYRMFADKG) and 266-289 (LAGIGFHWGFSDQSHFSTVFKQRF).

Positive regulator of tynA/maoA and feaB/padA, the genes for 2-phenylethylamine catabolism. This chain is Transcriptional activator FeaR (feaR), found in Escherichia coli (strain K12).